Consider the following 112-residue polypeptide: Large ribosomal subunit protein uL22 (112 aa).

The protein belongs to the universal ribosomal protein uL22 family. As to quaternary structure, part of the 50S ribosomal subunit.

Functionally, this protein binds specifically to 23S rRNA; its binding is stimulated by other ribosomal proteins, e.g. L4, L17, and L20. It is important during the early stages of 50S assembly. It makes multiple contacts with different domains of the 23S rRNA in the assembled 50S subunit and ribosome. In terms of biological role, the globular domain of the protein is located near the polypeptide exit tunnel on the outside of the subunit, while an extended beta-hairpin is found that lines the wall of the exit tunnel in the center of the 70S ribosome. The protein is Large ribosomal subunit protein uL22 of Legionella pneumophila subsp. pneumophila (strain Philadelphia 1 / ATCC 33152 / DSM 7513).